The chain runs to 241 residues: Octanoyltransferase (241 aa).

The region spanning Lys50 to Ile238 is the BPL/LPL catalytic domain. Substrate contacts are provided by residues Arg89 to His96, Ala169 to Gly171, and Gly182 to Ser184. The Acyl-thioester intermediate role is filled by Cys200.

Belongs to the LipB family.

It is found in the cytoplasm. It catalyses the reaction octanoyl-[ACP] + L-lysyl-[protein] = N(6)-octanoyl-L-lysyl-[protein] + holo-[ACP] + H(+). It functions in the pathway protein modification; protein lipoylation via endogenous pathway; protein N(6)-(lipoyl)lysine from octanoyl-[acyl-carrier-protein]: step 1/2. Catalyzes the transfer of endogenously produced octanoic acid from octanoyl-acyl-carrier-protein onto the lipoyl domains of lipoate-dependent enzymes. Lipoyl-ACP can also act as a substrate although octanoyl-ACP is likely to be the physiological substrate. This is Octanoyltransferase from Bartonella bacilliformis (strain ATCC 35685 / KC583 / Herrer 020/F12,63).